The following is a 170-amino-acid chain: Protein SprT (170 aa).

The 144-residue stretch at 22 to 165 (LQLANQHLGT…RQCGEKLQFI (144 aa)) folds into the SprT-like domain. His78 is a Zn(2+) binding site. Glu79 is an active-site residue. His82 provides a ligand contact to Zn(2+).

This sequence belongs to the SprT family. It depends on Zn(2+) as a cofactor.

It is found in the cytoplasm. The protein is Protein SprT of Yersinia pseudotuberculosis serotype O:1b (strain IP 31758).